The chain runs to 505 residues: Lysine--tRNA ligase (505 aa).

Residues Glu-415 and Glu-422 each coordinate Mg(2+).

It belongs to the class-II aminoacyl-tRNA synthetase family. Homodimer. It depends on Mg(2+) as a cofactor.

It is found in the cytoplasm. The catalysed reaction is tRNA(Lys) + L-lysine + ATP = L-lysyl-tRNA(Lys) + AMP + diphosphate. This is Lysine--tRNA ligase from Citrobacter koseri (strain ATCC BAA-895 / CDC 4225-83 / SGSC4696).